The following is a 440-amino-acid chain: Xylose isomerase (440 aa).

Residues His-100 and Asp-103 contribute to the active site. 7 residues coordinate Mg(2+): Glu-231, Glu-267, His-270, Asp-295, Asp-306, Asp-308, and Asp-338.

Belongs to the xylose isomerase family. As to quaternary structure, homotetramer. Mg(2+) serves as cofactor.

It localises to the cytoplasm. It catalyses the reaction alpha-D-xylose = alpha-D-xylulofuranose. The polypeptide is Xylose isomerase (Burkholderia vietnamiensis (strain G4 / LMG 22486) (Burkholderia cepacia (strain R1808))).